A 96-amino-acid polypeptide reads, in one-letter code: Co-chaperonin GroES (96 aa).

The protein belongs to the GroES chaperonin family. As to quaternary structure, heptamer of 7 subunits arranged in a ring. Interacts with the chaperonin GroEL.

The protein localises to the cytoplasm. In terms of biological role, together with the chaperonin GroEL, plays an essential role in assisting protein folding. The GroEL-GroES system forms a nano-cage that allows encapsulation of the non-native substrate proteins and provides a physical environment optimized to promote and accelerate protein folding. GroES binds to the apical surface of the GroEL ring, thereby capping the opening of the GroEL channel. The sequence is that of Co-chaperonin GroES from Solidesulfovibrio magneticus (strain ATCC 700980 / DSM 13731 / RS-1) (Desulfovibrio magneticus).